The primary structure comprises 65 residues: MPKMKTNRGAAKRFKKTGSGRIKRGKAFTSHILTKKSTKRKRSLRQADLVSSADVKNIKKILPYM.

A disordered region spans residues 1–29 (MPKMKTNRGAAKRFKKTGSGRIKRGKAFT). The segment covering 10–26 (AAKRFKKTGSGRIKRGK) has biased composition (basic residues).

The protein belongs to the bacterial ribosomal protein bL35 family.

The polypeptide is Large ribosomal subunit protein bL35 (Desulfotalea psychrophila (strain LSv54 / DSM 12343)).